Consider the following 63-residue polypeptide: UPF0337 protein PSPTO_1596 (63 aa).

The interval 20-63 (KQAVGKATDNTKLQAEGKAQELKGEGQQAKGEVKDAVKKGVDKV) is disordered. Residues 50-63 (GEVKDAVKKGVDKV) show a composition bias toward basic and acidic residues.

The protein belongs to the UPF0337 (CsbD) family.

This chain is UPF0337 protein PSPTO_1596, found in Pseudomonas syringae pv. tomato (strain ATCC BAA-871 / DC3000).